Consider the following 203-residue polypeptide: Formate hydrogenlyase subunit 2 (203 aa).

4 4Fe-4S ferredoxin-type domains span residues 2–32 (NRFV…HGLQ), 42–72 (NEKE…TRVD), 73–102 (GAVQ…FSGS), and 137–169 (RAIA…LVDN). 16 residues coordinate [4Fe-4S] cluster: Cys-12, Cys-15, Cys-18, Cys-22, Cys-51, Cys-54, Cys-59, Cys-63, Cys-82, Cys-85, Cys-88, Cys-92, Cys-143, Cys-146, Cys-155, and Cys-159.

As to quaternary structure, FHL comprises of a formate dehydrogenase, unidentified electron carriers and a hydrogenase (isoenzyme 3). In this non-energy conserving pathway, molecular hydrogen and carbodioxide are released from formate. The cofactor is [4Fe-4S] cluster.

Functionally, probable electron transfer protein for hydrogenase 3. This Escherichia coli (strain K12) protein is Formate hydrogenlyase subunit 2 (hycB).